Consider the following 413-residue polypeptide: Type II methyltransferase M.NaeI (413 aa).

An SAM-dependent MTase C5-type domain is found at Leu-4 to Glu-317. Residue Cys-78 is part of the active site.

It belongs to the class I-like SAM-binding methyltransferase superfamily. C5-methyltransferase family.

The enzyme catalyses a 2'-deoxycytidine in DNA + S-adenosyl-L-methionine = a 5-methyl-2'-deoxycytidine in DNA + S-adenosyl-L-homocysteine + H(+). Functionally, a methylase that recognizes the double-stranded sequence 5'-GCCGGC-3', methylates C-? on both strands, and protects the DNA from cleavage by the NaeI endonuclease. In Lentzea aerocolonigenes (Lechevalieria aerocolonigenes), this protein is Type II methyltransferase M.NaeI.